The chain runs to 177 residues: Large ribosomal subunit protein uL6 (177 aa).

The disordered stretch occupies residues 154 to 177 (PEPYKGKGVRYADEQVRRKEAKKK). The segment covering 155–171 (EPYKGKGVRYADEQVRR) has biased composition (basic and acidic residues).

It belongs to the universal ribosomal protein uL6 family. Part of the 50S ribosomal subunit.

Its function is as follows. This protein binds to the 23S rRNA, and is important in its secondary structure. It is located near the subunit interface in the base of the L7/L12 stalk, and near the tRNA binding site of the peptidyltransferase center. This is Large ribosomal subunit protein uL6 from Alcanivorax borkumensis (strain ATCC 700651 / DSM 11573 / NCIMB 13689 / SK2).